Here is a 100-residue protein sequence, read N- to C-terminus: NAD(P)H-quinone oxidoreductase subunit 4L, chloroplastic (100 aa).

3 consecutive transmembrane segments (helical) span residues 1 to 21 (MLEN…YGLT), 30 to 50 (LMCL…FSSF), and 60 to 80 (VFAI…LAII).

The protein belongs to the complex I subunit 4L family. NDH is composed of at least 16 different subunits, 5 of which are encoded in the nucleus.

It is found in the plastid. Its subcellular location is the chloroplast thylakoid membrane. The catalysed reaction is a plastoquinone + NADH + (n+1) H(+)(in) = a plastoquinol + NAD(+) + n H(+)(out). It carries out the reaction a plastoquinone + NADPH + (n+1) H(+)(in) = a plastoquinol + NADP(+) + n H(+)(out). Its function is as follows. NDH shuttles electrons from NAD(P)H:plastoquinone, via FMN and iron-sulfur (Fe-S) centers, to quinones in the photosynthetic chain and possibly in a chloroplast respiratory chain. The immediate electron acceptor for the enzyme in this species is believed to be plastoquinone. Couples the redox reaction to proton translocation, and thus conserves the redox energy in a proton gradient. This Staurastrum punctulatum (Green alga) protein is NAD(P)H-quinone oxidoreductase subunit 4L, chloroplastic.